Reading from the N-terminus, the 106-residue chain is UPF0145 protein AZOSEA16190 (106 aa).

This sequence belongs to the UPF0145 family.

This Aromatoleum aromaticum (strain DSM 19018 / LMG 30748 / EbN1) (Azoarcus sp. (strain EbN1)) protein is UPF0145 protein AZOSEA16190.